The sequence spans 360 residues: 3-isopropylmalate dehydrogenase (360 aa).

76 to 89 (GPKWDTIERDIRPE) lines the NAD(+) pocket. Positions 96, 106, 134, and 224 each coordinate substrate. Residues Asp224, Asp248, and Asp252 each coordinate Mg(2+). 282 to 294 (GSAPDIAGKGIAN) contacts NAD(+).

It belongs to the isocitrate and isopropylmalate dehydrogenases family. LeuB type 1 subfamily. Homodimer. The cofactor is Mg(2+). Mn(2+) serves as cofactor.

The protein localises to the cytoplasm. It carries out the reaction (2R,3S)-3-isopropylmalate + NAD(+) = 4-methyl-2-oxopentanoate + CO2 + NADH. It participates in amino-acid biosynthesis; L-leucine biosynthesis; L-leucine from 3-methyl-2-oxobutanoate: step 3/4. In terms of biological role, catalyzes the oxidation of 3-carboxy-2-hydroxy-4-methylpentanoate (3-isopropylmalate) to 3-carboxy-4-methyl-2-oxopentanoate. The product decarboxylates to 4-methyl-2 oxopentanoate. The polypeptide is 3-isopropylmalate dehydrogenase (Pseudomonas fluorescens (strain Pf0-1)).